Consider the following 100-residue polypeptide: DNA-directed RNA polymerase subunit Rpo11 (100 aa).

This sequence belongs to the archaeal Rpo11/eukaryotic RPB11/RPC19 RNA polymerase subunit family. In terms of assembly, part of the RNA polymerase complex.

The protein resides in the cytoplasm. It catalyses the reaction RNA(n) + a ribonucleoside 5'-triphosphate = RNA(n+1) + diphosphate. Functionally, DNA-dependent RNA polymerase (RNAP) catalyzes the transcription of DNA into RNA using the four ribonucleoside triphosphates as substrates. This Picrophilus torridus (strain ATCC 700027 / DSM 9790 / JCM 10055 / NBRC 100828 / KAW 2/3) protein is DNA-directed RNA polymerase subunit Rpo11.